The sequence spans 233 residues: MKVIKVENQVQGGKVAFEILKEKLANGAQTLGLATGSSPLEFYKEIVESDLDFSNLTSVNLDEYVGLDGDNPQSYRYFMQENLFNQKPFKESFLPRGVKDNAEAEVERYNQILADHPVDLQILGIGRNGHIGFNEPGTPFDSQTHLVELDQSTIEANARFFAKIEDVPTQAISMGIKNILDAKSIILFAYGESKAEAIAGTVSGPVTENLPASSLQNHPDVTIIADAEALSLL.

Asp62 functions as the Proton acceptor; for enolization step in the catalytic mechanism. The active-site For ring-opening step is the Asn128. The active-site Proton acceptor; for ring-opening step is His130. Glu135 serves as the catalytic For ring-opening step.

The protein belongs to the glucosamine/galactosamine-6-phosphate isomerase family. NagB subfamily.

The enzyme catalyses alpha-D-glucosamine 6-phosphate + H2O = beta-D-fructose 6-phosphate + NH4(+). The protein operates within amino-sugar metabolism; N-acetylneuraminate degradation; D-fructose 6-phosphate from N-acetylneuraminate: step 5/5. Its function is as follows. Catalyzes the reversible isomerization-deamination of glucosamine 6-phosphate (GlcN6P) to form fructose 6-phosphate (Fru6P) and ammonium ion. The chain is Glucosamine-6-phosphate deaminase from Streptococcus pneumoniae serotype 4 (strain ATCC BAA-334 / TIGR4).